The sequence spans 462 residues: Arginine biosynthesis bifunctional protein ArgJ, mitochondrial (462 aa).

6 residues coordinate substrate: threonine 189, lysine 215, threonine 236, glutamate 327, asparagine 457, and serine 462. Threonine 236 acts as the Nucleophile in catalysis.

This sequence belongs to the ArgJ family. Heterodimer of an alpha and a beta chain. Post-translationally, the alpha and beta chains are autoproteolytically processed from a single precursor protein within the mitochondrion.

The protein localises to the mitochondrion matrix. The catalysed reaction is N(2)-acetyl-L-ornithine + L-glutamate = N-acetyl-L-glutamate + L-ornithine. The enzyme catalyses L-glutamate + acetyl-CoA = N-acetyl-L-glutamate + CoA + H(+). It participates in amino-acid biosynthesis; L-arginine biosynthesis; L-ornithine and N-acetyl-L-glutamate from L-glutamate and N(2)-acetyl-L-ornithine (cyclic): step 1/1. Its pathway is amino-acid biosynthesis; L-arginine biosynthesis; N(2)-acetyl-L-ornithine from L-glutamate: step 1/4. Functionally, catalyzes two activities which are involved in the cyclic version of arginine biosynthesis: the synthesis of acetylglutamate from glutamate and acetyl-CoA, and of ornithine by transacetylation between acetylornithine and glutamate. The protein is Arginine biosynthesis bifunctional protein ArgJ, mitochondrial of Postia placenta (strain ATCC 44394 / Madison 698-R) (Brown rot fungus).